Consider the following 345-residue polypeptide: MSKKIVTLAGDGIGPEIMSAGLSVLKAVSKKIDFEYELEAKDFGGIAIDKHGHPLPEETLQAVKNADAILLAAIGHPKYNNAKVRPEQGLLALRKELGLYANVRPLKIYPALKKLSPIRNVENVDFLVIRELTGGIYFGQHELADDKARDVNDYSADEIRRILHFAFKSAQSRPRKLLTSVDKQNVLATSKLWRKMADEIADEYPDVRLEHQLVDSCAMLLITNPQQFDVIVTENLFGDILSDEASSLAGSLGVMPSSSHGFNGLALYEPIHGSAPDIAGKGIANPVSMILSIAMMLRESFGQEDGAAMIEKAVTQTFTDGILTKDLGGTATTKEMTEAILKNCQ.

Substrate is bound by residues Arg94, Arg104, Arg130, and Asp215. 3 residues coordinate Mg(2+): Asp215, Asp239, and Asp243. 273–285 is an NAD(+) binding site; it reads GSAPDIAGKGIAN.

It belongs to the isocitrate and isopropylmalate dehydrogenases family. LeuB type 1 subfamily. In terms of assembly, homodimer. Requires Mg(2+) as cofactor. It depends on Mn(2+) as a cofactor.

The protein resides in the cytoplasm. It catalyses the reaction (2R,3S)-3-isopropylmalate + NAD(+) = 4-methyl-2-oxopentanoate + CO2 + NADH. Its pathway is amino-acid biosynthesis; L-leucine biosynthesis; L-leucine from 3-methyl-2-oxobutanoate: step 3/4. Its function is as follows. Catalyzes the oxidation of 3-carboxy-2-hydroxy-4-methylpentanoate (3-isopropylmalate) to 3-carboxy-4-methyl-2-oxopentanoate. The product decarboxylates to 4-methyl-2 oxopentanoate. The sequence is that of 3-isopropylmalate dehydrogenase (leuB) from Lactococcus lactis subsp. lactis (strain IL1403) (Streptococcus lactis).